A 171-amino-acid chain; its full sequence is MDQFIKQDETGDLIETGMNVANHFLSAPIQGTNSLSKATIIPGVAPVLIGNPEQKNIQYPTASHQGSKSKGRGSGAKPIIVSSSEGGTGGTQIPEPLFAQTGQGGVVTTVYQDPTIQPTGSYRSVELAKIGKERMINRFVEKPRTSTPVTEFKRGGGRERLPKARQSKRRA.

Disordered stretches follow at residues Ile-57–Gln-100 and Pro-143–Ala-171. A compositionally biased stretch (basic and acidic residues) spans Glu-151–Pro-162.

This sequence belongs to the Orthorubulavirus I protein family.

The chain is I from Mumps virus genotype N (strain L-Zagreb vaccine) (MuV).